The sequence spans 670 residues: Solute carrier organic anion transporter family member 1A1 (670 aa).

Residues 1-20 (MEETEKKIATQEGRLFSKMK) lie on the Cytoplasmic side of the membrane. A helical transmembrane segment spans residues 21–40 (VFLLSLTCACLTKSLSGVYM). At 41–59 (NSMLTQIERQFDISTSVAG) the chain is on the extracellular side. A helical transmembrane segment spans residues 60–80 (LINGSFEIGNLFFIVFVSYFG). The Cytoplasmic portion of the chain corresponds to 81-86 (TKLHRP). The chain crosses the membrane as a helical span at residues 87–111 (VVIGIGCVIMGLGCLLMSLPHFFMG). At 112 to 155 (RYEYETTISPTGNLSSNSFLCMENRTQTLKPTQDPAECVKEMKS) the chain is on the extracellular side. Residues Asn-124 and Asn-135 are each glycosylated (N-linked (GlcNAc...) asparagine). Residues 156-184 (LMWICVMVGNIIRGIGETPIVPLGISYIE) traverse the membrane as a helical segment. The Cytoplasmic portion of the chain corresponds to 185-203 (DFAKSENSPLYIGILEMGK). The helical transmembrane segment at 204 to 224 (VAGPIFGLLLGSYCAQIYVDI) threads the bilayer. Residues 225-242 (GSVNTDDLTITPSDTRWV) are Extracellular-facing. A helical membrane pass occupies residues 243–267 (GAWWIGFLVCAGVNILTSIPFFFLP). Over 268-311 (KALPKKGQQENVAVTKDGKVEKYGGQAREENLGITKDFLTFMKR) the chain is Cytoplasmic. The chain crosses the membrane as a helical span at residues 312 to 333 (LFCNPIYMLFILTSVLQVNGFI). Topologically, residues 334–353 (NKFTFLPKYLEQQYGKSTAE) are extracellular. The chain crosses the membrane as a helical span at residues 354-377 (AIFLIGVYSLPPICLGYLIGGFIM). The Cytoplasmic segment spans residues 378–381 (KKFK). The helical transmembrane segment at 382–405 (ITVKKAAYLAFCLSVFEYLLFLCH) threads the bilayer. Topologically, residues 406-513 (FMLTCDNAAV…PECANRLQYF (108 aa)) are extracellular. The Kazal-like domain maps to 433–488 (SKVLADCNTRCSCSTNTWDPVCGDNGVAYMSACLAGCKKFVGTGTNMVFQDCSCIQ). 3 disulfide bridges follow: Cys-439/Cys-469, Cys-445/Cys-465, and Cys-454/Cys-486. The N-linked (GlcNAc...) asparagine glycan is linked to Asn-492. The helical transmembrane segment at 514 to 536 (LILTIIISFIYSLTAIPGYMVFL) threads the bilayer. Over 537 to 545 (RCVKSEEKS) the chain is Cytoplasmic. A helical transmembrane segment spans residues 546 to 571 (LGVGLHTFCIRVFAGIPAPVYFGALI). Over 572–605 (DRTCLHWGTLKCGQRGACRMYDINSFRHIYLGLP) the chain is Extracellular. Residues 606–623 (IALRGSSYLPAFFILILM) traverse the membrane as a helical segment. At 624-670 (RKFQFPGDIDSSATDHTEMMLGEKESEHTDVHGSPQVENDGELKTKL) the chain is on the cytoplasmic side. Ser-634 and Ser-635 each carry phosphoserine. Basic and acidic residues predominate over residues 645-654 (GEKESEHTDV). The disordered stretch occupies residues 645–670 (GEKESEHTDVHGSPQVENDGELKTKL).

It belongs to the organo anion transporter (TC 2.A.60) family. Binds to PDZK1. Interaction with PDZK1 is required for expression on hepatocyte surface. Glycosylated. As to expression, highly expressed in liver and kidney, and at lower levels in brain, lung, skeletal muscle and proximal colon.

The protein resides in the basolateral cell membrane. The enzyme catalyses estrone 3-sulfate(out) + hydrogencarbonate(in) = estrone 3-sulfate(in) + hydrogencarbonate(out). It carries out the reaction taurocholate(out) + hydrogencarbonate(in) = taurocholate(in) + hydrogencarbonate(out). It catalyses the reaction L-thyroxine(out) = L-thyroxine(in). The catalysed reaction is prostaglandin E2(out) = prostaglandin E2(in). The enzyme catalyses 17beta-estradiol 17-O-(beta-D-glucuronate)(out) = 17beta-estradiol 17-O-(beta-D-glucuronate)(in). It carries out the reaction dehydroepiandrosterone 3-sulfate(out) = dehydroepiandrosterone 3-sulfate(in). Mediates the Na(+)-independent transport of organic anions such as steroid sulfate conjugates (dehydroepiandrosterone sulfate (DHEAS), 17-beta-glucuronosyl estradiol, estrone-3-sulfate), conjugated (taurocholate) and unconjugated (cholate) bile acids, prostaglandin E2 (PGE2) and L-thyroxine T4. Also capable of transporting sulfobromophthalein (BSP), ouabain and gadoxetate. Hydrogencarbonate/HCO3(-) acts as the probable counteranion that exchanges for organic anions. Shows a pH-sensitive substrate specificity which may be ascribed to the protonation state of the binding site and leads to a stimulation of substrate transport in an acidic microenvironment. The sequence is that of Solute carrier organic anion transporter family member 1A1 from Rattus norvegicus (Rat).